The primary structure comprises 540 residues: Coiled-coil domain-containing protein 116 (540 aa).

A coiled-coil region spans residues Q79–A102. The segment at P347–M400 is disordered. 2 stretches are compositionally biased toward polar residues: residues S350 to S359 and Y372 to K381. At S393 the chain carries Phosphoserine.

It localises to the cytoplasm. It is found in the cytoskeleton. The protein resides in the microtubule organizing center. Its subcellular location is the centrosome. In Rattus norvegicus (Rat), this protein is Coiled-coil domain-containing protein 116 (Ccdc116).